The following is a 572-amino-acid chain: Proline--tRNA ligase (572 aa).

The protein belongs to the class-II aminoacyl-tRNA synthetase family. ProS type 1 subfamily. As to quaternary structure, homodimer.

It is found in the cytoplasm. The enzyme catalyses tRNA(Pro) + L-proline + ATP = L-prolyl-tRNA(Pro) + AMP + diphosphate. Its function is as follows. Catalyzes the attachment of proline to tRNA(Pro) in a two-step reaction: proline is first activated by ATP to form Pro-AMP and then transferred to the acceptor end of tRNA(Pro). As ProRS can inadvertently accommodate and process non-cognate amino acids such as alanine and cysteine, to avoid such errors it has two additional distinct editing activities against alanine. One activity is designated as 'pretransfer' editing and involves the tRNA(Pro)-independent hydrolysis of activated Ala-AMP. The other activity is designated 'posttransfer' editing and involves deacylation of mischarged Ala-tRNA(Pro). The misacylated Cys-tRNA(Pro) is not edited by ProRS. This is Proline--tRNA ligase from Psychrobacter cryohalolentis (strain ATCC BAA-1226 / DSM 17306 / VKM B-2378 / K5).